The primary structure comprises 235 residues: Ribonuclease PH (235 aa).

Phosphate-binding positions include R86 and 124-126 (GTR).

Belongs to the RNase PH family. Homohexameric ring arranged as a trimer of dimers.

The enzyme catalyses tRNA(n+1) + phosphate = tRNA(n) + a ribonucleoside 5'-diphosphate. Functionally, phosphorolytic 3'-5' exoribonuclease that plays an important role in tRNA 3'-end maturation. Removes nucleotide residues following the 3'-CCA terminus of tRNAs; can also add nucleotides to the ends of RNA molecules by using nucleoside diphosphates as substrates, but this may not be physiologically important. Probably plays a role in initiation of 16S rRNA degradation (leading to ribosome degradation) during starvation. This chain is Ribonuclease PH, found in Legionella pneumophila (strain Corby).